A 356-amino-acid chain; its full sequence is Tyrosine recombinase XerS (356 aa).

In terms of domain architecture, Core-binding (CB) spans 16 to 121 (VMPPYVLEYY…ALSSLYKYLT (106 aa)). Positions 169–354 (GFLDYIDSEY…INEEQKNALD (186 aa)) constitute a Tyr recombinase domain. Catalysis depends on residues Arg-210, Lys-234, His-306, Arg-309, and His-332. The active-site O-(3'-phospho-DNA)-tyrosine intermediate is the Tyr-341.

This sequence belongs to the 'phage' integrase family. XerS subfamily.

It localises to the cytoplasm. With respect to regulation, ftsK is required for recombination. Site-specific tyrosine recombinase, which acts by catalyzing the cutting and rejoining of the recombining DNA molecules. Essential to convert dimers of the bacterial chromosome into monomers to permit their segregation at cell division. Binds an atypical recombination dif site (difSL). Binds preferentially to the left arm and cooperatively to the right arm of difSL. In Lactococcus lactis subsp. cremoris (strain MG1363), this protein is Tyrosine recombinase XerS.